We begin with the raw amino-acid sequence, 130 residues long: Spore coat protein M (130 aa).

Its function is as follows. Involved in spore outer coat assembly. May be part of a cross-linked insoluble skeleton that surrounds the spore, serves as a matrix for the assembly of additional outer coat material, and confers structural stability to the final structure. The chain is Spore coat protein M (cotM) from Bacillus subtilis (strain 168).